The sequence spans 41 residues: Giant hemoglobin AI chain (41 aa).

The region spanning 2-41 is the Globin domain; sequence DCGMLQRIKVKQQWASVYSSGIAREDFGEAIWKAVFALAP.

The protein belongs to the globin family. As to quaternary structure, giant hemoglobin is composed of four heme-containing chains (AI to AIV), and two linker chains (AV and AVI).

The protein is Giant hemoglobin AI chain of Lamellibrachia sp. (Deep-sea giant tube worm).